The following is a 455-amino-acid chain: Phosphoglucosamine mutase (455 aa).

Residue serine 104 is the Phosphoserine intermediate of the active site. 4 residues coordinate Mg(2+): serine 104, aspartate 253, aspartate 255, and aspartate 257. The residue at position 104 (serine 104) is a Phosphoserine.

It belongs to the phosphohexose mutase family. It depends on Mg(2+) as a cofactor. In terms of processing, activated by phosphorylation.

It catalyses the reaction alpha-D-glucosamine 1-phosphate = D-glucosamine 6-phosphate. In terms of biological role, catalyzes the conversion of glucosamine-6-phosphate to glucosamine-1-phosphate. This chain is Phosphoglucosamine mutase, found in Psychrobacter cryohalolentis (strain ATCC BAA-1226 / DSM 17306 / VKM B-2378 / K5).